Consider the following 188-residue polypeptide: Elongation factor P-like protein (188 aa).

It belongs to the elongation factor P family.

The protein is Elongation factor P-like protein of Xanthomonas campestris pv. campestris (strain 8004).